The chain runs to 504 residues: Alpha,alpha-trehalose-phosphate synthase [UDP-forming] (504 aa).

Residues Tyr97 and Asp151 each contribute to the D-glucose 6-phosphate site. The UDP site is built by Arg287 and Lys292. Arg287 and Lys292 together coordinate UDP-alpha-D-glucose. Arg325 is a binding site for D-glucose 6-phosphate. Residue 386–394 (DGMNLVSYE) coordinates UDP-alpha-D-glucose. 390 to 394 (LVSYE) lines the UDP pocket. The segment at 482–504 (AGKLPTKETPVNGETSKLETSSQ) is disordered. Polar residues predominate over residues 493–504 (NGETSKLETSSQ).

It belongs to the glycosyltransferase 20 family.

The catalysed reaction is D-glucose 6-phosphate + UDP-alpha-D-glucose = alpha,alpha-trehalose 6-phosphate + UDP + H(+). Its pathway is carbohydrate biosynthesis. In terms of biological role, synthase catalytic subunit of the trehalose synthase complex that catalyzes the production of trehalose from glucose-6-phosphate and UDP-alpha-D-glucose in a two step process. This is Alpha,alpha-trehalose-phosphate synthase [UDP-forming] (tpsA) from Emericella nidulans (strain FGSC A4 / ATCC 38163 / CBS 112.46 / NRRL 194 / M139) (Aspergillus nidulans).